The chain runs to 1125 residues: Kinase and exchange factor for Rac B (1125 aa).

Disordered stretches follow at residues V50–N175, S247–F287, and K322–D362. The span at N59 to N91 shows a compositional bias: low complexity. Polar residues predominate over residues S92–F106. The span at T113 to P124 shows a compositional bias: pro residues. Over residues N137–K161 the composition is skewed to low complexity. The DH domain occupies K380–K571. The 222-residue stretch at R601–I822 folds into the PH domain. 2 disordered regions span residues I693–N729 and S761–G791. Residues N694–N729 show a composition bias toward low complexity. The 270-residue stretch at I848 to L1117 folds into the Protein kinase domain. ATP contacts are provided by residues I854–T862 and K876. D971 serves as the catalytic Proton acceptor.

Belongs to the protein kinase superfamily. STE Ser/Thr protein kinase family. The cofactor is Mg(2+).

It carries out the reaction L-seryl-[protein] + ATP = O-phospho-L-seryl-[protein] + ADP + H(+). The catalysed reaction is L-threonyl-[protein] + ATP = O-phospho-L-threonyl-[protein] + ADP + H(+). The polypeptide is Kinase and exchange factor for Rac B (Dictyostelium discoideum (Social amoeba)).